A 205-amino-acid chain; its full sequence is Small ribosomal subunit protein uS4 (205 aa).

The 64-residue stretch at 94-157 folds into the S4 RNA-binding domain; the sequence is SRLDTVVYRM…KQIALIQESI (64 aa).

The protein belongs to the universal ribosomal protein uS4 family. In terms of assembly, part of the 30S ribosomal subunit. Contacts protein S5. The interaction surface between S4 and S5 is involved in control of translational fidelity.

Functionally, one of the primary rRNA binding proteins, it binds directly to 16S rRNA where it nucleates assembly of the body of the 30S subunit. With S5 and S12 plays an important role in translational accuracy. The chain is Small ribosomal subunit protein uS4 from Rickettsia canadensis (strain McKiel).